A 145-amino-acid polypeptide reads, in one-letter code: 3-hydroxyacyl-[acyl-carrier-protein] dehydratase FabZ (145 aa).

Residue H47 is part of the active site.

This sequence belongs to the thioester dehydratase family. FabZ subfamily.

The protein localises to the cytoplasm. It carries out the reaction a (3R)-hydroxyacyl-[ACP] = a (2E)-enoyl-[ACP] + H2O. Involved in unsaturated fatty acids biosynthesis. Catalyzes the dehydration of short chain beta-hydroxyacyl-ACPs and long chain saturated and unsaturated beta-hydroxyacyl-ACPs. The polypeptide is 3-hydroxyacyl-[acyl-carrier-protein] dehydratase FabZ (Geotalea uraniireducens (strain Rf4) (Geobacter uraniireducens)).